Reading from the N-terminus, the 134-residue chain is Calcitonin gene-related peptide 2 (134 aa).

An N-terminal signal peptide occupies residues 1 to 26 (MDFWKFFPFLALSSMWVLCLASSLQA). Positions 27-86 (APFRSALESSLDLGTLSDQEKHLLLAALIQDYEQKARKLEQEEQETEGSRKGSSSSVISQ) are excised as a propeptide. A disordered region spans residues 65–91 (LEQEEQETEGSRKGSSSSVISQKRSCN). A compositionally biased stretch (low complexity) spans 77–89 (KGSSSSVISQKRS). A disulfide bond links C90 and C95. F125 is subject to Phenylalanine amide. A propeptide spanning residues 131–134 (DLRV) is cleaved from the precursor.

The protein belongs to the calcitonin family.

It localises to the secreted. In terms of biological role, CALCB/CGRP2 is a peptide hormone that induces vasodilation mediated by the CALCRL-RAMP1 receptor complex. Dilates a variety of vessels including the coronary, cerebral and systemic vasculature. Its abundance in the CNS also points toward a neurotransmitter or neuromodulator role. In Rattus norvegicus (Rat), this protein is Calcitonin gene-related peptide 2.